Consider the following 289-residue polypeptide: Polyketide biosynthesis malonyl CoA-acyl carrier protein transacylase BaeC (289 aa).

Residues Ser87 and His193 contribute to the active site.

It belongs to the FabD family.

The protein localises to the cytoplasm. It carries out the reaction holo-[ACP] + malonyl-CoA = malonyl-[ACP] + CoA. It participates in antibiotic biosynthesis; bacillaene biosynthesis. Functionally, involved in some intermediate steps for the synthesis of the antibiotic polyketide bacillaene which is involved in secondary metabolism. It catalyzes the transfer of the malonyl-CoA group to the acyl-carrier-protein AcpK (Mal-AcpK). The protein is Polyketide biosynthesis malonyl CoA-acyl carrier protein transacylase BaeC (baeC) of Bacillus velezensis (strain DSM 23117 / BGSC 10A6 / LMG 26770 / FZB42) (Bacillus amyloliquefaciens subsp. plantarum).